Here is a 321-residue protein sequence, read N- to C-terminus: Nitrilase blr3397 (321 aa).

Residues 10–277 (YKAAVVQAAS…ETILYADIAL (268 aa)) enclose the CN hydrolase domain. Residue glutamate 50 is the Proton acceptor of the active site. The Proton donor role is filled by lysine 137. Catalysis depends on cysteine 171, which acts as the Nucleophile.

It belongs to the carbon-nitrogen hydrolase superfamily. Nitrilase family. Homodecamer.

It carries out the reaction an aliphatic nitrile + 2 H2O = a carboxylate + NH4(+). Nitrilase that acts on various kinds of nitrile compounds such as aliphatic and aromatic nitriles. Has higher activity toward aliphatic nitriles compared to aromatic nitriles. Among the different substrates tested, has the highest activity toward hydrocinnamonitrile. The polypeptide is Nitrilase blr3397 (Bradyrhizobium diazoefficiens (strain JCM 10833 / BCRC 13528 / IAM 13628 / NBRC 14792 / USDA 110)).